A 133-amino-acid polypeptide reads, in one-letter code: Fluoride-specific ion channel FluC (133 aa).

4 consecutive transmembrane segments (helical) span residues 12–32 (LAMTGGALGSGLRFAIGASLI), 41–61 (WGTLTVNLLGSFVAGVLLVWL), 76–96 (IVGVIGGLTTFSSLMMECLVF), and 104–124 (MIGIYLAVTLLAGLALVFAGA). G81 and T84 together coordinate Na(+).

This sequence belongs to the fluoride channel Fluc/FEX (TC 1.A.43) family.

Its subcellular location is the cell inner membrane. It catalyses the reaction fluoride(in) = fluoride(out). With respect to regulation, na(+) is not transported, but it plays an essential structural role and its presence is essential for fluoride channel function. In terms of biological role, fluoride-specific ion channel. Important for reducing fluoride concentration in the cell, thus reducing its toxicity. The sequence is that of Fluoride-specific ion channel FluC from Xanthomonas axonopodis pv. citri (strain 306).